The primary structure comprises 230 residues: Uracil-DNA glycosylase (230 aa).

Catalysis depends on D70, which acts as the Proton acceptor.

It belongs to the uracil-DNA glycosylase (UDG) superfamily. UNG family.

It is found in the cytoplasm. It catalyses the reaction Hydrolyzes single-stranded DNA or mismatched double-stranded DNA and polynucleotides, releasing free uracil.. Functionally, excises uracil residues from the DNA which can arise as a result of misincorporation of dUMP residues by DNA polymerase or due to deamination of cytosine. This Pseudomonas fluorescens (strain SBW25) protein is Uracil-DNA glycosylase.